Reading from the N-terminus, the 150-residue chain is FAD synthase (150 aa).

ATP is bound by residues 11 to 12, 16 to 19, D96, and Y124; these read TF and HPGH.

This sequence belongs to the archaeal FAD synthase family. In terms of assembly, homodimer. A divalent metal cation serves as cofactor.

The catalysed reaction is FMN + ATP + H(+) = FAD + diphosphate. Its pathway is cofactor biosynthesis; FAD biosynthesis; FAD from FMN: step 1/1. Functionally, catalyzes the transfer of the AMP portion of ATP to flavin mononucleotide (FMN) to produce flavin adenine dinucleotide (FAD) coenzyme. The polypeptide is FAD synthase (Methanococcus maripaludis (strain DSM 14266 / JCM 13030 / NBRC 101832 / S2 / LL)).